The sequence spans 757 residues: Protein Lines homolog 1 (757 aa).

Ser-635 is modified (phosphoserine).

The protein belongs to the protein lines family. Expressed in adult testis, prostate, prostate, spleen, thymus, skeletal muscle, fetal kidney and brain.

The protein is Protein Lines homolog 1 of Homo sapiens (Human).